The chain runs to 342 residues: Small GTPase LIP1 (342 aa).

Positions 12–285 (KEQILAPLCG…FHGDPYKYNN (274 aa)) are small GTPase-like. GTP is bound by residues 29–36 (GDSGVGKT), 90–94 (DVSGH), and 160–163 (NKAD). Disordered stretches follow at residues 274–313 (TSFH…TPDN) and 323–342 (SVQE…DINV). A compositionally biased stretch (polar residues) spans 323-333 (SVQETTNNGSA).

The protein belongs to the small GTPase superfamily.

It localises to the nucleus. Its subcellular location is the cytoplasm. In terms of biological role, functional small GTPase that acts as a negative factor controlling the light-dependent period shortening of circadian rhythms and light-induced phase resetting during the subjective night. May protect the clock from excessive or mistimed light. Suppresses red and blue light-mediated photomorphogenesis and is required for light-controlled inhibition of endoreplication and tolerance to salt stress. The entrainment of the circadian clock is independent from the other pleiotropic effects. Could be a regulator of seedling establishment. This is Small GTPase LIP1 from Arabidopsis thaliana (Mouse-ear cress).